We begin with the raw amino-acid sequence, 288 residues long: 4-hydroxybenzoate octaprenyltransferase (288 aa).

7 helical membrane passes run 38-58 (IAAQSIPSLHILIVFTAGVFL), 98-120 (ILFASLVGLSFLLVLTLNSMTIW), 141-161 (LLQVVLGAAFGWSIPMGFSAV), 163-183 (ESLPLVCWVLFLVNILWSVIY), 213-233 (LIIGILQIVMIVLLVLVGSLA), 238-258 (VYYIALSLSALLFIYQQKLMV), and 268-288 (AFLNNNYVGLILFIGIFLSYL).

The protein belongs to the UbiA prenyltransferase family. It depends on Mg(2+) as a cofactor.

Its subcellular location is the cell inner membrane. It catalyses the reaction all-trans-octaprenyl diphosphate + 4-hydroxybenzoate = 4-hydroxy-3-(all-trans-octaprenyl)benzoate + diphosphate. The protein operates within cofactor biosynthesis; ubiquinone biosynthesis. Functionally, catalyzes the prenylation of para-hydroxybenzoate (PHB) with an all-trans polyprenyl group. Mediates the second step in the final reaction sequence of ubiquinone-8 (UQ-8) biosynthesis, which is the condensation of the polyisoprenoid side chain with PHB, generating the first membrane-bound Q intermediate 3-octaprenyl-4-hydroxybenzoate. The chain is 4-hydroxybenzoate octaprenyltransferase from Providencia stuartii.